A 312-amino-acid polypeptide reads, in one-letter code: Olfactory receptor 51B6 (312 aa).

Residues 1 to 23 (MGLNKSASTFQLTGFPGMEKAHH) are Extracellular-facing. An N-linked (GlcNAc...) asparagine glycan is attached at Asn4. Residues 24–44 (WIFIPLLAAYISILLGNGTLL) form a helical membrane-spanning segment. The Cytoplasmic portion of the chain corresponds to 45–52 (FLIRNDHN). Residues 53 to 73 (LHEPMYYFLAMLAATDLGVTL) form a helical membrane-spanning segment. Residues 74-97 (TTMPTVLGVLWLDHREIGHGACFS) lie on the Extracellular side of the membrane. An intrachain disulfide couples Cys95 to Cys187. Residues 98-118 (QAYFIHTLSVMESGVLLAMAY) traverse the membrane as a helical segment. At 119-137 (DCFITIRSPLRYTSILTNT) the chain is on the cytoplasmic side. The helical transmembrane segment at 138-158 (QVMKIGVRVLTRAGLSIMPIV) threads the bilayer. Residues 159 to 194 (VRLHWFPYCRSHVLSHAFCLHQDVIKLACADITFNR) are Extracellular-facing. A helical transmembrane segment spans residues 195 to 215 (LYPVVVLFAMVLLDFLIIFFS). Topologically, residues 216–235 (YILILKTVMGIGSGGERAKA) are cytoplasmic. Residues 236–256 (LNTCVSHICCILVFYVTVVCL) form a helical membrane-spanning segment. Over 257–271 (TFIHRFGKHVPHVVH) the chain is Extracellular. The helical transmembrane segment at 272–292 (ITMSYIHFLFPPFMNPFIYSI) threads the bilayer. Residues 293 to 312 (KTKQIQSGILRLFSLPHSRA) lie on the Cytoplasmic side of the membrane.

The protein belongs to the G-protein coupled receptor 1 family.

Its subcellular location is the cell membrane. Odorant receptor. This is Olfactory receptor 51B6 (OR51B6) from Homo sapiens (Human).